A 163-amino-acid chain; its full sequence is Putative 4-hydroxy-4-methyl-2-oxoglutarate aldolase (163 aa).

Substrate is bound by residues 76 to 79 (GDMI) and R98. Position 99 (D99) interacts with a divalent metal cation.

This sequence belongs to the class II aldolase/RraA-like family. In terms of assembly, homotrimer. A divalent metal cation serves as cofactor.

It catalyses the reaction 4-hydroxy-4-methyl-2-oxoglutarate = 2 pyruvate. The enzyme catalyses oxaloacetate + H(+) = pyruvate + CO2. Catalyzes the aldol cleavage of 4-hydroxy-4-methyl-2-oxoglutarate (HMG) into 2 molecules of pyruvate. Also contains a secondary oxaloacetate (OAA) decarboxylase activity due to the common pyruvate enolate transition state formed following C-C bond cleavage in the retro-aldol and decarboxylation reactions. The polypeptide is Putative 4-hydroxy-4-methyl-2-oxoglutarate aldolase (Pseudomonas fluorescens).